The primary structure comprises 335 residues: Beta-hexosaminidase (335 aa).

Substrate-binding positions include Asp-60, Arg-68, Arg-133, and Lys-163 to His-164. The active-site Proton donor/acceptor is the His-176. The Nucleophile role is filled by Asp-247.

This sequence belongs to the glycosyl hydrolase 3 family. NagZ subfamily.

The protein localises to the cytoplasm. The catalysed reaction is Hydrolysis of terminal non-reducing N-acetyl-D-hexosamine residues in N-acetyl-beta-D-hexosaminides.. Its pathway is cell wall biogenesis; peptidoglycan recycling. In terms of biological role, plays a role in peptidoglycan recycling by cleaving the terminal beta-1,4-linked N-acetylglucosamine (GlcNAc) from peptide-linked peptidoglycan fragments, giving rise to free GlcNAc, anhydro-N-acetylmuramic acid and anhydro-N-acetylmuramic acid-linked peptides. This chain is Beta-hexosaminidase, found in Stenotrophomonas maltophilia (strain R551-3).